The primary structure comprises 341 residues: uncharacterized protein (341 aa).

WD repeat units lie at residues 19 to 59 (SLGS…QVHT), 106 to 145 (GHTD…RCLG), 252 to 293 (PFSN…HHKG), and 303 to 341 (VSQS…ALTS).

The protein resides in the cytoplasm. It is found in the nucleus. This is an uncharacterized protein from Schizosaccharomyces pombe (strain 972 / ATCC 24843) (Fission yeast).